The chain runs to 105 residues: Antitoxin YfjZ (105 aa).

This sequence belongs to the CbeA/YafW/YfjZ antitoxin family.

Antitoxin component of a type IV toxin-antitoxin (TA) system. Antitoxin that counteracts the effect of cognate toxin YpjF. Also counteracts the effect of non-cognate toxins CbtA and YfkI. The chain is Antitoxin YfjZ (yfjZ) from Escherichia coli (strain K12).